The sequence spans 298 residues: 4-nitrophenylphosphatase (298 aa).

Homodimer. The N-terminus is blocked.

It carries out the reaction 4-nitrophenyl phosphate + H2O = 4-nitrophenol + phosphate + H(+). Its activity is regulated as follows. Activity enhanced by Mg(2+) ion but inhibited by Zn(2+) ion. This is 4-nitrophenylphosphatase (pho2) from Schizosaccharomyces pombe (strain 972 / ATCC 24843) (Fission yeast).